We begin with the raw amino-acid sequence, 124 residues long: Small ribosomal subunit protein uS12 (124 aa).

Residue Asp-89 is modified to 3-methylthioaspartic acid. The segment at 104–124 (ATGVKDRKQGRSKYGAKRPKE) is disordered. Over residues 113–124 (GRSKYGAKRPKE) the composition is skewed to basic residues.

Belongs to the universal ribosomal protein uS12 family. As to quaternary structure, part of the 30S ribosomal subunit. Contacts proteins S8 and S17. May interact with IF1 in the 30S initiation complex.

Its function is as follows. With S4 and S5 plays an important role in translational accuracy. Functionally, interacts with and stabilizes bases of the 16S rRNA that are involved in tRNA selection in the A site and with the mRNA backbone. Located at the interface of the 30S and 50S subunits, it traverses the body of the 30S subunit contacting proteins on the other side and probably holding the rRNA structure together. The combined cluster of proteins S8, S12 and S17 appears to hold together the shoulder and platform of the 30S subunit. The sequence is that of Small ribosomal subunit protein uS12 from Picosynechococcus sp. (strain ATCC 27264 / PCC 7002 / PR-6) (Agmenellum quadruplicatum).